A 429-amino-acid chain; its full sequence is UDP-N-acetylglucosamine 1-carboxyvinyltransferase (429 aa).

Residue Lys22 to Asn23 coordinates phosphoenolpyruvate. A UDP-N-acetyl-alpha-D-glucosamine-binding site is contributed by Arg102. Residue Cys126 is the Proton donor of the active site. Position 126 is a 2-(S-cysteinyl)pyruvic acid O-phosphothioketal (Cys126). UDP-N-acetyl-alpha-D-glucosamine is bound by residues Arg131 to Leu135, Asp316, and Ile338.

The protein belongs to the EPSP synthase family. MurA subfamily.

The protein resides in the cytoplasm. It carries out the reaction phosphoenolpyruvate + UDP-N-acetyl-alpha-D-glucosamine = UDP-N-acetyl-3-O-(1-carboxyvinyl)-alpha-D-glucosamine + phosphate. It functions in the pathway cell wall biogenesis; peptidoglycan biosynthesis. Its function is as follows. Cell wall formation. Adds enolpyruvyl to UDP-N-acetylglucosamine. This Methylobacterium radiotolerans (strain ATCC 27329 / DSM 1819 / JCM 2831 / NBRC 15690 / NCIMB 10815 / 0-1) protein is UDP-N-acetylglucosamine 1-carboxyvinyltransferase.